The primary structure comprises 392 residues: Probable inactive serine/threonine-protein kinase DDB_G0280855 (392 aa).

Positions 46 to 349 constitute a Protein kinase domain; the sequence is ITKKTIYACD…IERIIQHPYF (304 aa). ATP-binding positions include 52–60 and lysine 75; that span reads YACDINGTM.

The protein belongs to the protein kinase superfamily. CMGC Ser/Thr protein kinase family. MAP kinase subfamily.

In Dictyostelium discoideum (Social amoeba), this protein is Probable inactive serine/threonine-protein kinase DDB_G0280855.